Reading from the N-terminus, the 256-residue chain is DNA repair protein RecO (256 aa).

The protein belongs to the RecO family.

In terms of biological role, involved in DNA repair and RecF pathway recombination. The sequence is that of DNA repair protein RecO from Rhizobium etli (strain CIAT 652).